A 649-amino-acid chain; its full sequence is Beta-galactosidase-1-like protein 3 (649 aa).

Glu-203 serves as the catalytic Proton donor. The active-site Nucleophile is Glu-277.

This sequence belongs to the glycosyl hydrolase 35 family.

The protein is Beta-galactosidase-1-like protein 3 (Glb1l3) of Mus musculus (Mouse).